The sequence spans 110 residues: Cytochrome c6 (110 aa).

The signal sequence occupies residues 1–25 (MKKTLSVLFTAFSFCVIGFTQVAFA). The heme c site is built by cysteine 39, cysteine 42, histidine 43, and methionine 83.

It belongs to the cytochrome c family. PetJ subfamily. Monomer. Binds 1 heme c group covalently per subunit.

Its subcellular location is the plastid. The protein localises to the chloroplast thylakoid lumen. In terms of biological role, functions as an electron carrier between membrane-bound cytochrome b6-f and photosystem I in oxygenic photosynthesis. This Porphyra purpurea (Red seaweed) protein is Cytochrome c6 (petJ).